The sequence spans 300 residues: Ribonuclease HIII (300 aa).

Residues arginine 86–isoleucine 300 enclose the RNase H type-2 domain. 3 residues coordinate a divalent metal cation: aspartate 92, glutamate 93, and aspartate 196.

This sequence belongs to the RNase HII family. RnhC subfamily. The cofactor is Mn(2+). Mg(2+) serves as cofactor.

It localises to the cytoplasm. It carries out the reaction Endonucleolytic cleavage to 5'-phosphomonoester.. In terms of biological role, endonuclease that specifically degrades the RNA of RNA-DNA hybrids. This chain is Ribonuclease HIII, found in Chlamydia abortus (strain DSM 27085 / S26/3) (Chlamydophila abortus).